Here is a 121-residue protein sequence, read N- to C-terminus: uncharacterized protein (121 aa).

2 helical membrane passes run 16–36 and 74–94; these read GFMV…GFAV and LYIA…MKTI.

The protein resides in the cell membrane. This is an uncharacterized protein from Bacillus subtilis (strain 168).